Reading from the N-terminus, the 181-residue chain is Adenylate kinase (181 aa).

10–15 (GAGKGT) serves as a coordination point for ATP. Residues 30–59 (STGELFRRNIEEGTKLGVEAKRYLDAGDLV) are NMP. Residues T31, R36, 57–59 (DLV), 85–88 (GYPR), and Q92 each bind AMP. An LID region spans residues 126-132 (GRGRADD). Position 127 (R127) interacts with ATP. Residues R129 and R140 each contribute to the AMP site. Residue G166 participates in ATP binding.

The protein belongs to the adenylate kinase family. Monomer.

The protein resides in the cytoplasm. The catalysed reaction is AMP + ATP = 2 ADP. It functions in the pathway purine metabolism; AMP biosynthesis via salvage pathway; AMP from ADP: step 1/1. Catalyzes the reversible transfer of the terminal phosphate group between ATP and AMP. Plays an important role in cellular energy homeostasis and in adenine nucleotide metabolism. The sequence is that of Adenylate kinase from Mycobacterium tuberculosis (strain ATCC 25177 / H37Ra).